Here is a 255-residue protein sequence, read N- to C-terminus: NADH dehydrogenase [ubiquinone] flavoprotein 2, mitochondrial (255 aa).

The transit peptide at 1–35 directs the protein to the mitochondrion; it reads MLARLAAKRLLEIRQVFRQPTSQVTRSLSTALNYH. Positions 130, 135, 171, and 175 each coordinate [2Fe-2S] cluster. The interval 214-255 is disordered; that stretch reads RKGEKPPHGTQNPKRIKCGPEGGNKTLLGEPKPPQFRDLDAC.

The protein belongs to the complex I 24 kDa subunit family. Complex I is composed of at least 49 different subunits. This is a component of the flavoprotein-sulfur (FP) fragment of the enzyme. [2Fe-2S] cluster is required as a cofactor.

The protein resides in the mitochondrion inner membrane. The enzyme catalyses a ubiquinone + NADH + 5 H(+)(in) = a ubiquinol + NAD(+) + 4 H(+)(out). Functionally, core subunit of the mitochondrial membrane respiratory chain NADH dehydrogenase (Complex I) that is believed to belong to the minimal assembly required for catalysis. Complex I functions in the transfer of electrons from NADH to the respiratory chain. The immediate electron acceptor for the enzyme is believed to be ubiquinone. The polypeptide is NADH dehydrogenase [ubiquinone] flavoprotein 2, mitochondrial (Arabidopsis thaliana (Mouse-ear cress)).